The following is a 189-amino-acid chain: Accessory gene regulator protein B (189 aa).

The next 5 helical transmembrane spans lie at 49 to 69 (IAYI…FYLI), 81 to 100 (SFWC…LVIV), 110 to 130 (IILT…ATKK), 143 to 163 (YYAI…KEPF), and 164 to 184 (AQFI…IFFI).

Belongs to the AgrB family.

It localises to the cell membrane. Essential for the production of a quorum sensing system signal molecule, the autoinducing peptide (AIP). This quorum sensing system is responsible for the regulation of the expression of virulence factor genes. Involved in the proteolytic processing of AgrD, the precursor of AIP. This chain is Accessory gene regulator protein B, found in Staphylococcus aureus (strain COL).